The chain runs to 788 residues: Cell division cycle protein 27 homolog (788 aa).

The interval 198–436 is disordered; it reads YLDSPASSLK…PLPSVASSLN (239 aa). The span at 217 to 229 shows a compositional bias: low complexity; that stretch reads GPSSSSAASTAEP. 3 stretches are compositionally biased toward polar residues: residues 241 to 273, 293 to 303, and 319 to 360; these read RGTI…SRIN, SSVTGSRSSLF, and NRAN…NPVR. Over residues 366–378 the composition is skewed to low complexity; it reads ADAAAAANKTAKT. A compositionally biased stretch (polar residues) spans 391-414; that stretch reads VSRNSNLARSLSGSTNSVASTASE. TPR repeat units follow at residues 561 to 594, 596 to 628, 629 to 662, 664 to 696, and 731 to 764; these read PQSW…DKRF, YAYT…SPRD, YRAW…NPTN, AMLC…NPLD, and AFIF…DPRG.

The protein belongs to the APC3/CDC27 family. The APC/C complex is probably composed of at least 12 subunits: apc-2, apc-10, apc-11, cdc-26, emb-1, emb-27, emb-30, mat-1, mat-2, mat-3, such-1 and gfi-3. Expressed in the ventral nerve cord.

The protein resides in the nucleus. It functions in the pathway protein modification; protein ubiquitination. Probable component of the anaphase promoting complex/cyclosome (APC/C), a cell cycle-regulated E3 ubiquitin ligase that controls progression through mitosis and the G1 phase of the cell cycle. The APC/C complex acts by mediating ubiquitination and subsequent degradation of target proteins. Developmental role in early embryogenesis and the metaphase to anaphase transition in oocyte and spermatocyte meiosis and mitosis in germ cells. Required for embryonic anterior-posterior axis formation. Plays a role in regulating the abundance of glr-1 receptors in postmitotic neurons, which may in turn control animal locomotion. In Caenorhabditis elegans, this protein is Cell division cycle protein 27 homolog.